Here is a 381-residue protein sequence, read N- to C-terminus: Formate dehydrogenase, mitochondrial (381 aa).

The transit peptide at methionine 1–glutamate 25 directs the protein to the mitochondrion. Positions 125 and 149 each coordinate substrate. Residues threonine 150, arginine 204 to isoleucine 205, aspartate 224, proline 259 to lysine 263, asparagine 285, aspartate 311, and histidine 335 to glycine 338 contribute to the NAD(+) site.

It belongs to the D-isomer specific 2-hydroxyacid dehydrogenase family. FDH subfamily. As to quaternary structure, homodimer. Found at high levels in developing tubers, at intermediate level in stems, veins, stolons, and stamens, and at low level in leaves and roots.

It is found in the mitochondrion. The catalysed reaction is formate + NAD(+) = CO2 + NADH. In terms of biological role, catalyzes the NAD(+)-dependent oxidation of formate to carbon dioxide. Involved in the cell stress response. Involved in formate-dependent oxygen uptake coupled to ATP synthesis. In Solanum tuberosum (Potato), this protein is Formate dehydrogenase, mitochondrial.